We begin with the raw amino-acid sequence, 430 residues long: MATTPIFNASCSFPSTRGIDCKSYIGLRSNVSKVSVASSRIATSQRRNLVVRASESGNGHAKKLGMSDAECEAAVAAGNVPEAPPVPPKPAAPVGTPIIKPLNLSRRPRRNRASPVTRAAFQETDISPANFVYPLFIHEGEEDTPIGAMPGCYRLGWRHGLVQEVAKARAVGVNSIVLFPKVPEALKNSTGDEAYNDNGLVPRTIRLLKDKYPDLIIYTDVALDPYSSDGHDGIVREDGVIMNDETVHQLCKQAVSQARAGADVVSPSDMMDGRVGAIRSALDAEGFQNVSIMSYTAKYASSFYGPFREALDSNPRFGDKKTYQMNPANYREALIEAREDEAEGADILLVKPGLPYLDIIRLLRDKSPLPIAAYQVSGEYSMIKAGGVLKMIDEEKVMMESLMCLRRAGADIILTYFALQAATCLCGEKR.

The N-terminal 52 residues, 1–52 (MATTPIFNASCSFPSTRGIDCKSYIGLRSNVSKVSVASSRIATSQRRNLVVR), are a transit peptide targeting the chloroplast. Pro residues predominate over residues 82 to 91 (EAPPVPPKPA). The interval 82–101 (EAPPVPPKPAAPVGTPIIKP) is disordered. Lys-298 serves as the catalytic Schiff-base intermediate with substrate. 2 residues coordinate 5-aminolevulinate: Arg-308 and Lys-320. Glu-336 lines the Mg(2+) pocket. Catalysis depends on Lys-351, which acts as the Schiff-base intermediate with substrate. Ser-377 and Tyr-416 together coordinate 5-aminolevulinate.

This sequence belongs to the ALAD family. Homooctamer. The cofactor is Mg(2+). Highly expressed in cotyledons during dark-to-light transition.

The protein localises to the plastid. The protein resides in the chloroplast. It catalyses the reaction 2 5-aminolevulinate = porphobilinogen + 2 H2O + H(+). The protein operates within porphyrin-containing compound metabolism; protoporphyrin-IX biosynthesis; coproporphyrinogen-III from 5-aminolevulinate: step 1/4. It participates in porphyrin-containing compound metabolism; chlorophyll biosynthesis. Catalyzes an early step in the biosynthesis of tetrapyrroles. Binds two molecules of 5-aminolevulinate per subunit, each at a distinct site, and catalyzes their condensation to form porphobilinogen. The sequence is that of Delta-aminolevulinic acid dehydratase 1, chloroplastic (HEMB1) from Arabidopsis thaliana (Mouse-ear cress).